Here is a 261-residue protein sequence, read N- to C-terminus: Thiazole synthase (261 aa).

Lysine 97 acts as the Schiff-base intermediate with DXP in catalysis. Residues glycine 158, 184 to 185 (AG), and 206 to 207 (AS) contribute to the 1-deoxy-D-xylulose 5-phosphate site.

The protein belongs to the ThiG family. Homotetramer. Forms heterodimers with either ThiH or ThiS.

The protein localises to the cytoplasm. It catalyses the reaction [ThiS sulfur-carrier protein]-C-terminal-Gly-aminoethanethioate + 2-iminoacetate + 1-deoxy-D-xylulose 5-phosphate = [ThiS sulfur-carrier protein]-C-terminal Gly-Gly + 2-[(2R,5Z)-2-carboxy-4-methylthiazol-5(2H)-ylidene]ethyl phosphate + 2 H2O + H(+). The protein operates within cofactor biosynthesis; thiamine diphosphate biosynthesis. Its function is as follows. Catalyzes the rearrangement of 1-deoxy-D-xylulose 5-phosphate (DXP) to produce the thiazole phosphate moiety of thiamine. Sulfur is provided by the thiocarboxylate moiety of the carrier protein ThiS. In vitro, sulfur can be provided by H(2)S. The sequence is that of Thiazole synthase from Corynebacterium diphtheriae (strain ATCC 700971 / NCTC 13129 / Biotype gravis).